Here is a 728-residue protein sequence, read N- to C-terminus: 1,4-alpha-glucan branching enzyme GlgB (728 aa).

The active-site Nucleophile is the D405. The active-site Proton donor is the E458.

This sequence belongs to the glycosyl hydrolase 13 family. GlgB subfamily. Monomer.

The catalysed reaction is Transfers a segment of a (1-&gt;4)-alpha-D-glucan chain to a primary hydroxy group in a similar glucan chain.. Its pathway is glycan biosynthesis; glycogen biosynthesis. Catalyzes the formation of the alpha-1,6-glucosidic linkages in glycogen by scission of a 1,4-alpha-linked oligosaccharide from growing alpha-1,4-glucan chains and the subsequent attachment of the oligosaccharide to the alpha-1,6 position. This is 1,4-alpha-glucan branching enzyme GlgB from Escherichia coli O157:H7.